Here is a 307-residue protein sequence, read N- to C-terminus: GMP synthase [glutamine-hydrolyzing] subunit B (307 aa).

Residues 1 to 184 form the GMPS ATP-PPase domain; the sequence is MWENFIEEKV…LGLPEKIYNR (184 aa). 27–33 contacts ATP; the sequence is SGGVDSS.

Heterodimer composed of a glutamine amidotransferase subunit (A) and a GMP-binding subunit (B).

It catalyses the reaction XMP + L-glutamine + ATP + H2O = GMP + L-glutamate + AMP + diphosphate + 2 H(+). It functions in the pathway purine metabolism; GMP biosynthesis; GMP from XMP (L-Gln route): step 1/1. Its function is as follows. Catalyzes the synthesis of GMP from XMP. In Thermococcus kodakarensis (strain ATCC BAA-918 / JCM 12380 / KOD1) (Pyrococcus kodakaraensis (strain KOD1)), this protein is GMP synthase [glutamine-hydrolyzing] subunit B.